Consider the following 501-residue polypeptide: ATP synthase subunit alpha (501 aa).

Glycine 169–threonine 176 lines the ATP pocket.

Belongs to the ATPase alpha/beta chains family. In terms of assembly, F-type ATPases have 2 components, CF(1) - the catalytic core - and CF(0) - the membrane proton channel. CF(1) has five subunits: alpha(3), beta(3), gamma(1), delta(1), epsilon(1). CF(0) has three main subunits: a(1), b(2) and c(9-12). The alpha and beta chains form an alternating ring which encloses part of the gamma chain. CF(1) is attached to CF(0) by a central stalk formed by the gamma and epsilon chains, while a peripheral stalk is formed by the delta and b chains.

It localises to the cell membrane. The enzyme catalyses ATP + H2O + 4 H(+)(in) = ADP + phosphate + 5 H(+)(out). Functionally, produces ATP from ADP in the presence of a proton gradient across the membrane. The alpha chain is a regulatory subunit. The chain is ATP synthase subunit alpha from Streptococcus pneumoniae serotype 19F (strain G54).